The primary structure comprises 271 residues: MVISVVLLLLAAYAVPAQGLGSFVHCEPCDEKALSMCPPSPLGCELVKEPGCGCCMTCALAEGQSCGVYTERCAQGLRCLPRQDEEKPLHALLHGRGVCLNEKSYGEQTKIERDSREHEEPTTSEMAEETYSPKVFRPKHTRISELKAEAVKKDRRKKLTQSKFVGGAENTAHPRVIPAPEMRQESEQGPCRRHMEASLQEFKASPRMVPRAVYLPNCDRKGFYKRKQCKPSRGRKRGICWCVDKYGMKLPGMEYVDGDFQCHAFDSSNVE.

Residues methionine 1–glycine 19 form the signal peptide. Positions serine 22 to glutamate 102 constitute an IGFBP N-terminal domain. Cystine bridges form between cysteine 26-cysteine 52, cysteine 29-cysteine 54, cysteine 37-cysteine 55, cysteine 44-cysteine 58, cysteine 66-cysteine 79, and cysteine 73-cysteine 99. The span at threonine 109–proline 121 shows a compositional bias: basic and acidic residues. Positions threonine 109 to glutamate 129 are disordered. Serine 115 bears the Phosphoserine mark. The Thyroglobulin type-1 domain maps to glutamine 188 to cysteine 262. Intrachain disulfides connect cysteine 191–cysteine 218, cysteine 229–cysteine 240, and cysteine 242–cysteine 262.

Interacts with IGF1; this interaction enhances the growth stimulatory effects of IGF1 on fibroblasts. Interacts with CAV1; this interaction allows trafficking of IGFBP5 from the plasma membrane to the nucleus. Interacts with NCL; this interaction is necessary for IGFBP5 localization to the nucleus. Most abundant in kidney, uterus and gastrocnemius muscle.

It is found in the secreted. It localises to the cytoplasm. The protein resides in the nucleus. In terms of biological role, multifunctional protein that plays a critical role in regulating the availability of IGFs to their receptors and thereby regulates IGF-mediated cellular processes including proliferation, differentiation, and apoptosis in a cell-type specific manner. Increases the cell proliferation of osteoblasts, intestinal smooth muscle cells and neuroblastoma cells. Enhances adhesion and survival of epithelial cells but decreases adhesion of mesenchymal cells. Once secreted, acts as a major mediator of mTORC1-dependent feedback inhibition of IGF1 signaling. Also plays a role in the induction of extracellular matrix (ECM) production and deposition independently of its nuclear translocation and binding to IGFs. Acts itself as a growth factor that can act independently of IGFs to regulate bone formation. Acts as a ligand for the ROR1 receptor which triggers formation of ROR1/HER2 heterodimer to enhance CREB oncogenic signaling. In Mus musculus (Mouse), this protein is Insulin-like growth factor-binding protein 5 (Igfbp5).